Consider the following 282-residue polypeptide: Pantothenate synthetase (282 aa).

Position 30 to 37 (30 to 37) interacts with ATP; it reads MGFLHDGH. Residue His-37 is the Proton donor of the active site. Gln-60 contributes to the (R)-pantoate binding site. Gln-60 contacts beta-alanine. Residue 146-149 participates in ATP binding; the sequence is GQKD. (R)-pantoate is bound at residue Gln-152. Residues Ile-175 and 183–186 contribute to the ATP site; that span reads KSSR.

Belongs to the pantothenate synthetase family. In terms of assembly, homodimer.

The protein resides in the cytoplasm. The catalysed reaction is (R)-pantoate + beta-alanine + ATP = (R)-pantothenate + AMP + diphosphate + H(+). It functions in the pathway cofactor biosynthesis; (R)-pantothenate biosynthesis; (R)-pantothenate from (R)-pantoate and beta-alanine: step 1/1. Catalyzes the condensation of pantoate with beta-alanine in an ATP-dependent reaction via a pantoyl-adenylate intermediate. The sequence is that of Pantothenate synthetase from Campylobacter jejuni subsp. jejuni serotype O:23/36 (strain 81-176).